The primary structure comprises 582 residues: Calcium-dependent protein kinase 24 (582 aa).

Residues 1 to 36 (MGSCVSSPLKGSPFGKRPVRRRHSSNSRTSSVPRFD) form a disordered region. Gly2 is lipidated: N-myristoyl glycine. The 259-residue stretch at 66–324 (YDLGKELGRG…VQEVLEHPWI (259 aa)) folds into the Protein kinase domain. ATP is bound by residues 72–80 (LGRGEFGVT) and Lys95. Asp190 functions as the Proton acceptor in the catalytic mechanism. Ser230 is subject to Phosphoserine. An autoinhibitory domain region spans residues 330 to 360 (APNVNLGDNVRTKIQQFLLMNRFKKKVLRIV). EF-hand domains lie at 367–402 (EEIA…IGQV), 403–438 (VPDG…LKRM), 439–474 (GCDE…DKLG), and 478–513 (GNDQ…GTDW). 18 residues coordinate Ca(2+): Asp380, Asp382, Asn384, His386, Glu391, Asp416, Asp418, Asn420, Met422, Glu427, Asp452, Asn454, Asn456, Glu463, Asp491, Asn493, Asp495, and Arg497. Phosphoserine is present on Ser499. Residue Glu502 coordinates Ca(2+).

The protein belongs to the protein kinase superfamily. Ser/Thr protein kinase family. CDPK subfamily.

It is found in the membrane. The catalysed reaction is L-seryl-[protein] + ATP = O-phospho-L-seryl-[protein] + ADP + H(+). It catalyses the reaction L-threonyl-[protein] + ATP = O-phospho-L-threonyl-[protein] + ADP + H(+). Activated by calcium. Autophosphorylation may play an important role in the regulation of the kinase activity. May play a role in signal transduction pathways that involve calcium as a second messenger. The protein is Calcium-dependent protein kinase 24 (CPK24) of Arabidopsis thaliana (Mouse-ear cress).